The primary structure comprises 340 residues: Phosphoribosylformylglycinamidine cyclo-ligase (340 aa).

This sequence belongs to the AIR synthase family.

Its subcellular location is the cytoplasm. It catalyses the reaction 2-formamido-N(1)-(5-O-phospho-beta-D-ribosyl)acetamidine + ATP = 5-amino-1-(5-phospho-beta-D-ribosyl)imidazole + ADP + phosphate + H(+). The protein operates within purine metabolism; IMP biosynthesis via de novo pathway; 5-amino-1-(5-phospho-D-ribosyl)imidazole from N(2)-formyl-N(1)-(5-phospho-D-ribosyl)glycinamide: step 2/2. This Streptococcus uberis (strain ATCC BAA-854 / 0140J) protein is Phosphoribosylformylglycinamidine cyclo-ligase.